The following is a 304-amino-acid chain: Phosphoribosylaminoimidazole-succinocarboxamide synthase (304 aa).

It belongs to the SAICAR synthetase family.

It catalyses the reaction 5-amino-1-(5-phospho-D-ribosyl)imidazole-4-carboxylate + L-aspartate + ATP = (2S)-2-[5-amino-1-(5-phospho-beta-D-ribosyl)imidazole-4-carboxamido]succinate + ADP + phosphate + 2 H(+). It functions in the pathway purine metabolism; IMP biosynthesis via de novo pathway; 5-amino-1-(5-phospho-D-ribosyl)imidazole-4-carboxamide from 5-amino-1-(5-phospho-D-ribosyl)imidazole-4-carboxylate: step 1/2. This chain is Phosphoribosylaminoimidazole-succinocarboxamide synthase, found in Streptomyces griseus subsp. griseus (strain JCM 4626 / CBS 651.72 / NBRC 13350 / KCC S-0626 / ISP 5235).